A 1456-amino-acid chain; its full sequence is Leucine-rich repeat-containing protein 9 (1456 aa).

LRR repeat units follow at residues Phe-53 to Leu-78, Cys-97 to Leu-119, Ile-120 to Leu-141, Lys-142 to Asn-164, Gln-166 to Lys-188, Thr-190 to Asn-212, Leu-224 to Lys-248, and Asn-264 to Leu-287. The disordered stretch occupies residues Ser-305–Val-325. An LRR 9 repeat occupies Leu-339–Thr-362. The residue at position 525 (Tyr-525) is a Phosphotyrosine. 23 LRR repeats span residues Lys-661–Tyr-683, Ser-684–Leu-705, Thr-706–Leu-727, Asn-729–Gly-748, Leu-749–Leu-772, Thr-776–Arg-802, Leu-806–Gln-833, Tyr-876–Leu-898, Glu-899–Cys-920, Val-921–Leu-942, Thr-943–Asn-965, Leu-967–Leu-991, Glu-993–Leu-1010, Leu-1013–Val-1037, Phe-1082–His-1105, Phe-1106–Leu-1128, Pro-1129–Gln-1151, Met-1191–Arg-1214, Leu-1215–Leu-1237, Ile-1238–Lys-1260, Ser-1262–Leu-1283, Val-1284–Val-1307, and Pro-1309–Leu-1335.

This Mus musculus (Mouse) protein is Leucine-rich repeat-containing protein 9 (Lrrc9).